We begin with the raw amino-acid sequence, 257 residues long: tRNA-cytidine(32) 2-sulfurtransferase (257 aa).

The short motif at 37 to 42 (SGGKDS) is the PP-loop motif element. The [4Fe-4S] cluster site is built by cysteine 112, cysteine 115, and cysteine 202.

This sequence belongs to the TtcA family. Homodimer. The cofactor is Mg(2+). [4Fe-4S] cluster serves as cofactor.

It is found in the cytoplasm. The enzyme catalyses cytidine(32) in tRNA + S-sulfanyl-L-cysteinyl-[cysteine desulfurase] + AH2 + ATP = 2-thiocytidine(32) in tRNA + L-cysteinyl-[cysteine desulfurase] + A + AMP + diphosphate + H(+). It participates in tRNA modification. Catalyzes the ATP-dependent 2-thiolation of cytidine in position 32 of tRNA, to form 2-thiocytidine (s(2)C32). The sulfur atoms are provided by the cysteine/cysteine desulfurase (IscS) system. The chain is tRNA-cytidine(32) 2-sulfurtransferase from Geobacter sulfurreducens (strain ATCC 51573 / DSM 12127 / PCA).